Reading from the N-terminus, the 109-residue chain is MSLTADPPACTVPAAGGSSTHKLVNGGAEKIIFKIKSSNNNEYRIAPVFGFVDPSGSKDVVITRTAGAPKEDKLVIHFAPAPADATDAQAAFAAVTPAGTVTIPMSATA.

The MSP domain occupies 2 to 109 (SLTADPPACT…TVTIPMSATA (108 aa)).

As to expression, expressed at higher level in testis.

The protein is Sperm-specific class P protein 10 (ssp-10) of Caenorhabditis elegans.